The following is a 227-amino-acid chain: Translation initiation factor 6 (227 aa).

Belongs to the eIF-6 family.

Functionally, binds to the 50S ribosomal subunit and prevents its association with the 30S ribosomal subunit to form the 70S initiation complex. This Methanococcus maripaludis (strain C5 / ATCC BAA-1333) protein is Translation initiation factor 6.